Consider the following 237-residue polypeptide: Phosphoribosylaminoimidazole-succinocarboxamide synthase (237 aa).

The protein belongs to the SAICAR synthetase family.

It carries out the reaction 5-amino-1-(5-phospho-D-ribosyl)imidazole-4-carboxylate + L-aspartate + ATP = (2S)-2-[5-amino-1-(5-phospho-beta-D-ribosyl)imidazole-4-carboxamido]succinate + ADP + phosphate + 2 H(+). The protein operates within purine metabolism; IMP biosynthesis via de novo pathway; 5-amino-1-(5-phospho-D-ribosyl)imidazole-4-carboxamide from 5-amino-1-(5-phospho-D-ribosyl)imidazole-4-carboxylate: step 1/2. The polypeptide is Phosphoribosylaminoimidazole-succinocarboxamide synthase (Campylobacter fetus subsp. fetus (strain 82-40)).